An 899-amino-acid chain; its full sequence is Periodic tryptophan protein 2 homolog (899 aa).

13 WD repeats span residues asparagine 9–phenylalanine 52, serine 53–histidine 92, serine 94–alanine 132, glutamine 149–proline 188, glycine 193–glutamate 232, glutamine 252–threonine 291, isoleucine 294–lysine 334, glycine 337–threonine 376, glutamate 379–threonine 418, proline 422–serine 464, glycine 465–glutamate 504, glutamine 507–glycine 546, and alanine 569–lysine 608. The disordered stretch occupies residues aspartate 639–lysine 668. The segment covering phenylalanine 647–lysine 668 has biased composition (basic and acidic residues). Residues asparagine 669–aspartate 709 form a WD 14 repeat. Residues threonine 866 to valine 899 form a disordered region. A compositionally biased stretch (acidic residues) spans asparagine 889–valine 899.

It belongs to the WD repeat PWP2 family.

This is Periodic tryptophan protein 2 homolog from Neurospora crassa (strain ATCC 24698 / 74-OR23-1A / CBS 708.71 / DSM 1257 / FGSC 987).